A 638-amino-acid chain; its full sequence is Keratin, type II cytoskeletal 2 oral (638 aa).

The head stretch occupies residues methionine 1–glutamine 182. An omega-N-methylarginine mark is found at arginine 85 and arginine 110. Residues glutamate 183–leucine 218 are coil 1A. Positions glutamate 183–methionine 496 constitute an IF rod domain. The linker 1 stretch occupies residues glutamine 219–tyrosine 237. The tract at residues isoleucine 238–methionine 329 is coil 1B. A linker 12 region spans residues glutamine 330–isoleucine 353. Positions isoleucine 354–glutamate 492 are coil 2. The tail stretch occupies residues glutamate 493 to lysine 638. The disordered stretch occupies residues serine 532–lysine 638. The span at glycine 540–tyrosine 549 shows a compositional bias: low complexity. Positions glycine 550 to serine 572 are enriched in gly residues. A compositionally biased stretch (low complexity) spans serine 573–serine 583. Arginine 584 carries the omega-N-methylarginine modification. Residues serine 590–serine 608 are compositionally biased toward low complexity. Gly residues predominate over residues glycine 609–serine 620. The span at serine 626–lysine 638 shows a compositional bias: low complexity.

The protein belongs to the intermediate filament family. Heterotetramer of two type I and two type II keratins.

Its function is as follows. Probably contributes to terminal cornification. The polypeptide is Keratin, type II cytoskeletal 2 oral (KRT76) (Homo sapiens (Human)).